The sequence spans 283 residues: Probable endonuclease 4 (283 aa).

Histidine 69, histidine 109, glutamate 145, aspartate 179, histidine 182, histidine 216, aspartate 229, histidine 231, and glutamate 261 together coordinate Zn(2+).

The protein belongs to the AP endonuclease 2 family. The cofactor is Zn(2+).

The catalysed reaction is Endonucleolytic cleavage to 5'-phosphooligonucleotide end-products.. In terms of biological role, endonuclease IV plays a role in DNA repair. It cleaves phosphodiester bonds at apurinic or apyrimidinic (AP) sites, generating a 3'-hydroxyl group and a 5'-terminal sugar phosphate. The sequence is that of Probable endonuclease 4 from Prosthecochloris aestuarii (strain DSM 271 / SK 413).